A 307-amino-acid polypeptide reads, in one-letter code: Aspartate carbamoyltransferase catalytic subunit (307 aa).

Arg-56 and Thr-57 together coordinate carbamoyl phosphate. Lys-84 provides a ligand contact to L-aspartate. Residues Arg-106, His-136, and Gln-139 each coordinate carbamoyl phosphate. L-aspartate contacts are provided by Arg-169 and Arg-221. Ala-262 and Pro-263 together coordinate carbamoyl phosphate.

It belongs to the aspartate/ornithine carbamoyltransferase superfamily. ATCase family. As to quaternary structure, heterododecamer (2C3:3R2) of six catalytic PyrB chains organized as two trimers (C3), and six regulatory PyrI chains organized as three dimers (R2).

The catalysed reaction is carbamoyl phosphate + L-aspartate = N-carbamoyl-L-aspartate + phosphate + H(+). The protein operates within pyrimidine metabolism; UMP biosynthesis via de novo pathway; (S)-dihydroorotate from bicarbonate: step 2/3. Functionally, catalyzes the condensation of carbamoyl phosphate and aspartate to form carbamoyl aspartate and inorganic phosphate, the committed step in the de novo pyrimidine nucleotide biosynthesis pathway. This chain is Aspartate carbamoyltransferase catalytic subunit, found in Streptococcus pneumoniae (strain P1031).